Consider the following 150-residue polypeptide: Histone deacetylase complex subunit SAP18 (150 aa).

This sequence belongs to the SAP18 family. In terms of assembly, forms a complex with SIN3 and histone deacetylase. Interacts with the N-terminal residues of TRL. Interacts with BCD; in vitro and yeast cells.

The protein localises to the nucleus. It localises to the cytoplasm. In terms of biological role, involved in the tethering of the SIN3 complex to core histone proteins. Interacts with bicoid (bcd) to repress transcription of bicoid target genes in the anterior tip of the embryo; a process known as retraction. Interacts with Trl and binds to Polycomb response elements at the bithorax complex. May contribute to the regulation of other homeotic gene expressions. In Drosophila melanogaster (Fruit fly), this protein is Histone deacetylase complex subunit SAP18 (Bin1).